The sequence spans 852 residues: Disks large homolog 2 (852 aa).

Residues Cys-5 and Cys-7 are each lipidated (S-palmitoyl cysteine). Phosphoserine is present on Ser-28. Tyr-58 carries the post-translational modification Phosphotyrosine. A Phosphoserine modification is found at Ser-65. 2 PDZ domains span residues 98 to 184 and 193 to 279; these read EITL…VRRR and EIKL…VGKP. Phosphoserine occurs at positions 307, 328, 360, 365, 406, and 414. One can recognise a PDZ 3 domain in the interval 421–501; the sequence is KVVLHKGSTG…QTVTIIAQYQ (81 aa). At Tyr-505 the chain carries Phosphotyrosine. Ser-528, Ser-530, and Ser-553 each carry phosphoserine. In terms of domain architecture, SH3 spans 536 to 606; it reads KRSLYVRAMF…PSKRRVERKE (71 aa). In terms of domain architecture, Guanylate kinase-like spans 662 to 837; that stretch reads TRPVIILGPM…IYNQCKLVIE (176 aa). Residues Tyr-732 and Tyr-737 each carry the phosphotyrosine modification.

It belongs to the MAGUK family. As to quaternary structure, interacts through its PDZ domains with NETO1. Interacts with NOS1/nNOS through second PDZ domain. Interacts with KCNJ2/Kir2.1 (via C-terminus) through one of its PDZ domains. Interacts with KCNJ4. Interacts with FRMPD4 (via C-terminus). Interacts with LRFN1. Interacts with LRFN2 and LRFN4. Interacts with FASLG. Interacts with ADAM22. Interacts with DGKI (via PDZ-binding motif). Post-translationally, palmitoylation of isoform 1 and isoform 2 is not required for targeting to postsynaptic density. Detected in juxtaparanodal zones in the central nervous system and at nerve terminal plexuses of basket cells in the cerebellum (at protein level). Brain. High levels in cerebellar Purkinje cells. Expressed in pyramidal cells of the Ammons's horn and granular cells of the dentate gyrus in the hippocampus as well as cerebral cortex and striatum. High levels in dorsal horn of spinal cord.

It is found in the cell membrane. The protein resides in the postsynaptic density. Its subcellular location is the synapse. It localises to the cell projection. The protein localises to the axon. It is found in the membrane. The protein resides in the perikaryon. Required for perception of chronic pain through NMDA receptor signaling. Regulates surface expression of NMDA receptors in dorsal horn neurons of the spinal cord. Interacts with the cytoplasmic tail of NMDA receptor subunits as well as inward rectifying potassium channels. Involved in regulation of synaptic stability at cholinergic synapses. Part of the postsynaptic protein scaffold of excitatory synapses. In Rattus norvegicus (Rat), this protein is Disks large homolog 2 (Dlg2).